The primary structure comprises 232 residues: Ribonuclease 3 (232 aa).

Residues 5–134 (ENLLFDRFGL…FLGALLLDKG (130 aa)) enclose the RNase III domain. E47 lines the Mg(2+) pocket. The active site involves D51. The Mg(2+) site is built by D120 and E123. E123 is a catalytic residue. Residues 160-229 (DYKTKLQELL…AKNAFEKENH (70 aa)) enclose the DRBM domain.

It belongs to the ribonuclease III family. In terms of assembly, homodimer. Requires Mg(2+) as cofactor.

It is found in the cytoplasm. The enzyme catalyses Endonucleolytic cleavage to 5'-phosphomonoester.. Digests double-stranded RNA. Involved in the processing of primary rRNA transcript to yield the immediate precursors to the large and small rRNAs (23S and 16S). Processes some mRNAs, and tRNAs when they are encoded in the rRNA operon. Processes pre-crRNA and tracrRNA of type II CRISPR loci if present in the organism. The protein is Ribonuclease 3 of Streptococcus gordonii (strain Challis / ATCC 35105 / BCRC 15272 / CH1 / DL1 / V288).